A 417-amino-acid chain; its full sequence is uncharacterized protein (417 aa).

The first 21 residues, 1–21, serve as a signal peptide directing secretion; it reads MPYYWGAILIGGVFLAGCTQN.

This is an uncharacterized protein from Methanocaldococcus jannaschii (strain ATCC 43067 / DSM 2661 / JAL-1 / JCM 10045 / NBRC 100440) (Methanococcus jannaschii).